The following is a 292-amino-acid chain: Aspartate carbamoyltransferase catalytic subunit (292 aa).

2 residues coordinate carbamoyl phosphate: arginine 49 and threonine 50. An L-aspartate-binding site is contributed by lysine 77. Residues arginine 99, histidine 127, and glutamine 130 each coordinate carbamoyl phosphate. L-aspartate-binding residues include arginine 161 and arginine 211. Residues glycine 250 and proline 251 each coordinate carbamoyl phosphate.

This sequence belongs to the aspartate/ornithine carbamoyltransferase superfamily. ATCase family. In terms of assembly, heterododecamer (2C3:3R2) of six catalytic PyrB chains organized as two trimers (C3), and six regulatory PyrI chains organized as three dimers (R2).

The enzyme catalyses carbamoyl phosphate + L-aspartate = N-carbamoyl-L-aspartate + phosphate + H(+). It participates in pyrimidine metabolism; UMP biosynthesis via de novo pathway; (S)-dihydroorotate from bicarbonate: step 2/3. In terms of biological role, catalyzes the condensation of carbamoyl phosphate and aspartate to form carbamoyl aspartate and inorganic phosphate, the committed step in the de novo pyrimidine nucleotide biosynthesis pathway. This Campylobacter lari (strain RM2100 / D67 / ATCC BAA-1060) protein is Aspartate carbamoyltransferase catalytic subunit.